The following is a 104-amino-acid chain: Integration host factor subunit beta (104 aa).

Belongs to the bacterial histone-like protein family. In terms of assembly, heterodimer of an alpha and a beta chain.

In terms of biological role, this protein is one of the two subunits of integration host factor, a specific DNA-binding protein that functions in genetic recombination as well as in transcriptional and translational control. This is Integration host factor subunit beta (ihfB) from Xylella fastidiosa (strain 9a5c).